Here is a 520-residue protein sequence, read N- to C-terminus: Ribonuclease Y (520 aa).

The helical transmembrane segment at 1-21 threads the bilayer; the sequence is MEILIIVIAAVVGLALGFAIA. A KH domain is found at 210 to 295; it reads CVSVFNLESD…EVVKKTRKQI (86 aa). The HD domain occupies 336–429; it reads LLQHSREVAK…VQVCDAISGA (94 aa).

Belongs to the RNase Y family.

The protein resides in the cell membrane. Functionally, endoribonuclease that initiates mRNA decay. In Christiangramia forsetii (strain DSM 17595 / CGMCC 1.15422 / KT0803) (Gramella forsetii), this protein is Ribonuclease Y.